A 491-amino-acid chain; its full sequence is Argininosuccinate lyase (491 aa).

It belongs to the lyase 1 family. Argininosuccinate lyase subfamily.

Its subcellular location is the cytoplasm. The enzyme catalyses 2-(N(omega)-L-arginino)succinate = fumarate + L-arginine. The protein operates within amino-acid biosynthesis; L-arginine biosynthesis; L-arginine from L-ornithine and carbamoyl phosphate: step 3/3. In Methanosarcina mazei (strain ATCC BAA-159 / DSM 3647 / Goe1 / Go1 / JCM 11833 / OCM 88) (Methanosarcina frisia), this protein is Argininosuccinate lyase.